Here is a 444-residue protein sequence, read N- to C-terminus: Platelet-activating factor acetylhydrolase (444 aa).

The N-terminal stretch at methionine 1–proline 21 is a signal peptide. Residues asparagine 60 and asparagine 200 are each glycosylated (N-linked (GlcNAc...) asparagine). The active-site Nucleophile is serine 274. Active-site charge relay system residues include aspartate 297 and histidine 352. N-linked (GlcNAc...) asparagine glycans are attached at residues asparagine 424 and asparagine 434.

It belongs to the AB hydrolase superfamily. Lipase family. N-glycosylated. In terms of tissue distribution, plasma.

The protein localises to the secreted. Its subcellular location is the extracellular space. The enzyme catalyses a 1-O-alkyl-2-acetyl-sn-glycero-3-phosphocholine + H2O = a 1-O-alkyl-sn-glycero-3-phosphocholine + acetate + H(+). It carries out the reaction 1-O-decyl-2-acetyl-sn-glycero-3-phosphocholine + H2O = 1-O-decyl-sn-glycero-3-phosphocholine + acetate + H(+). It catalyses the reaction 1-O-dodecyl-2-acetyl-sn-glycero-3-phosphocholine + H2O = 1-O-dodecyl-sn-glycero-3-phosphocholine + acetate + H(+). The catalysed reaction is 1-O-tetradecyl-2-acetyl-sn-glycero-3-phosphocholine + H2O = 1-O-tetradecyl-sn-glycero-3-phosphocholine + acetate + H(+). The enzyme catalyses 1-O-hexadecyl-2-acetyl-sn-glycero-3-phosphocholine + H2O = 1-O-hexadecyl-sn-glycero-3-phosphocholine + acetate + H(+). It carries out the reaction 1-O-octadecyl-2-acetyl-sn-glycero-3-phosphocholine + H2O = 1-O-octadecyl-sn-glycero-3-phosphocholine + acetate + H(+). It catalyses the reaction 1-hexadecanoyl-2-acetyl-sn-glycero-3-phosphocholine + H2O = 1-hexadecanoyl-sn-glycero-3-phosphocholine + acetate + H(+). The catalysed reaction is 1-hexadecanoyl-2-propionyl-sn-glycero-3-phosphocholine + H2O = propanoate + 1-hexadecanoyl-sn-glycero-3-phosphocholine + H(+). The enzyme catalyses 1-hexadecanoyl-2-butanoyl-sn-glycero-3-phosphocholine + H2O = butanoate + 1-hexadecanoyl-sn-glycero-3-phosphocholine + H(+). It carries out the reaction 1-hexadecanoyl-2-pentanoyl-sn-glycero-3-phosphocholine + H2O = pentanoate + 1-hexadecanoyl-sn-glycero-3-phosphocholine + H(+). It catalyses the reaction 1-hexadecanoyl-2-glutaroyl-sn-glycero-3-phosphocholine + H2O = glutarate + 1-hexadecanoyl-sn-glycero-3-phosphocholine + H(+). The catalysed reaction is 1-hexadecanoyl-2-(5-oxopentanoyl)-sn-glycero-3-phosphocholine + H2O = 5-oxopentanoate + 1-hexadecanoyl-sn-glycero-3-phosphocholine + H(+). The enzyme catalyses 1-hexadecanoyl-2-(9-oxononanoyl)-sn-glycero-3-phosphocholine + H2O = 9-oxononanoate + 1-hexadecanoyl-sn-glycero-3-phosphocholine + H(+). It carries out the reaction 1-hexadecanoyl-2-[9-hydroperoxy-(10E-octadecenoyl)]-sn-glycero-3-phosphocholine + H2O = 9-hydroperoxy-10E-octadecenoate + 1-hexadecanoyl-sn-glycero-3-phosphocholine + H(+). It catalyses the reaction 1-hexadecanoyl-2-(10-hydroperoxy-8E-octadecenoyl)-sn-glycero-3-phosphocholine + H2O = 10-hydroperoxy-(8E)-octadecenoate + 1-hexadecanoyl-sn-glycero-3-phosphocholine + H(+). Lipoprotein-associated calcium-independent phospholipase A2 involved in phospholipid catabolism during inflammatory and oxidative stress response. At the lipid-aqueous interface, hydrolyzes the ester bond of fatty acyl group attached at sn-2 position of phospholipids (phospholipase A2 activity). Specifically targets phospholipids with a short-chain fatty acyl group at sn-2 position. Can hydrolyze phospholipids with long fatty acyl chains, only if they carry oxidized functional groups. Hydrolyzes and inactivates platelet-activating factor (PAF, 1-O-alkyl-2-acetyl-sn-glycero-3-phosphocholine), a potent pro-inflammatory signaling lipid that acts through PTAFR on various innate immune cells. Hydrolyzes oxidatively truncated phospholipids carrying an aldehyde group at omega position, preventing their accumulation in low-density lipoprotein (LDL) particles and uncontrolled pro-inflammatory effects. As part of high-density lipoprotein (HDL) particles, can hydrolyze phospholipids having long-chain fatty acyl hydroperoxides at sn-2 position and protect against potential accumulation of these oxylipins in the vascular wall. Catalyzes the release from membrane phospholipids of F2-isoprostanes, lipid biomarkers of cellular oxidative damage. The sequence is that of Platelet-activating factor acetylhydrolase (PLA2G7) from Bos taurus (Bovine).